The sequence spans 147 residues: Hemoglobin subunit beta (147 aa).

N-acetylvaline is present on Val2. One can recognise a Globin domain in the interval 3 to 147 (HLTPEEKSAV…VANALAHKYH (145 aa)). A Phosphothreonine modification is found at Thr13. Ser45 carries the post-translational modification Phosphoserine. Lys60 carries the post-translational modification N6-acetyllysine. His64 contributes to the heme b binding site. Lys83 carries the post-translational modification N6-acetyllysine. His93 serves as a coordination point for heme b. An S-nitrosocysteine modification is found at Cys94. Lys145 is subject to N6-acetyllysine.

The protein belongs to the globin family. Heterotetramer of two alpha chains and two beta chains. Red blood cells.

Involved in oxygen transport from the lung to the various peripheral tissues. The polypeptide is Hemoglobin subunit beta (HBB) (Gorilla gorilla gorilla (Western lowland gorilla)).